Here is a 137-residue protein sequence, read N- to C-terminus: Large ribosomal subunit protein uL16 (137 aa).

This sequence belongs to the universal ribosomal protein uL16 family. Part of the 50S ribosomal subunit.

In terms of biological role, binds 23S rRNA and is also seen to make contacts with the A and possibly P site tRNAs. This chain is Large ribosomal subunit protein uL16, found in Francisella tularensis subsp. tularensis (strain FSC 198).